Reading from the N-terminus, the 726-residue chain is Endo-1,4-beta-xylanase/feruloyl esterase (726 aa).

A signal peptide spans 1–19 (MKKLLVALSLIAGSLTASA). One can recognise a GH10 domain in the interval 27-369 (YAAGPGLKDA…KRSLQIIRDF (343 aa)). The active-site Proton donor; for xylanase activity is Glu-161. Catalysis depends on Glu-280, which acts as the Nucleophile; for xylanase activity. A feruloyl esterase region spans residues 370–726 (DAAMDNRKPK…LEKMAQSLFK (357 aa)). Ser-629 (nucleophile; for esterase activity) is an active-site residue.

It in the N-terminal section; belongs to the glycosyl hydrolase 10 (cellulase F) family. Monomer or homodimer.

It catalyses the reaction Endohydrolysis of (1-&gt;4)-beta-D-xylosidic linkages in xylans.. The catalysed reaction is feruloyl-polysaccharide + H2O = ferulate + polysaccharide.. It participates in glycan degradation; xylan degradation. Its function is as follows. Involved in degradation of plant cell wall polysaccharides. Has endo-xylanase activity towards substrates such as oat spelt xylan (OSX), acetylated xylo-oligosaccharides and acetylated xylan, producing primarily xylobiose; cannot hydrolyze xylobiose to xylose. Also has feruloyl esterase activity, releasing ferulic acid from methylferulate, and from the more natural substrates wheat bran, corn fiber, and XOS(FA,Ac), a corn fiber-derived substrate enriched in O-acetyl and ferulic acid esters. Exhibits negligible acetyl esterase activity on sugar acetates. Acts synergistically with Xyl3A to increase the release of xylose from xylan. Does not possess endoglucanase or mannanase activities since it is not able to hydrolyze carboxymethyl cellulose and locust bean gum. This is Endo-1,4-beta-xylanase/feruloyl esterase from Xylanibacter ruminicola (strain ATCC 19189 / DSM 19721 / CIP 105475 / JCM 8958 / 23) (Prevotella ruminicola).